A 179-amino-acid chain; its full sequence is ATP-dependent protease subunit HslV (179 aa).

The active site involves Thr-5. Residues Cys-164 and Thr-167 each coordinate Na(+).

This sequence belongs to the peptidase T1B family. HslV subfamily. As to quaternary structure, a double ring-shaped homohexamer of HslV is capped on each side by a ring-shaped HslU homohexamer. The assembly of the HslU/HslV complex is dependent on binding of ATP.

The protein resides in the cytoplasm. The enzyme catalyses ATP-dependent cleavage of peptide bonds with broad specificity.. With respect to regulation, allosterically activated by HslU binding. Protease subunit of a proteasome-like degradation complex believed to be a general protein degrading machinery. The chain is ATP-dependent protease subunit HslV from Carboxydothermus hydrogenoformans (strain ATCC BAA-161 / DSM 6008 / Z-2901).